The primary structure comprises 246 residues: 4'-phosphopantetheinyl transferase Svp (246 aa).

Residues 223–232 (AGTAEESAEG) show a composition bias toward low complexity. The segment at 223–246 (AGTAEESAEGAGKEATADDRTAVP) is disordered. Residues 233–246 (AGKEATADDRTAVP) show a composition bias toward basic and acidic residues.

The protein belongs to the P-Pant transferase superfamily. Gsp/Sfp/HetI/AcpT family.

It catalyses the reaction apo-[ACP] + CoA = holo-[ACP] + adenosine 3',5'-bisphosphate + H(+). Its function is as follows. Transfers the 4'-phosphopantetheine moiety from coenzyme A to a Ser of an acyl-carrier-protein. The enzyme is able to transfer the cofactor to a broad range of enzymes with acyl- or peptidyl-carrier protein domains. The sequence is that of 4'-phosphopantetheinyl transferase Svp (svp) from Streptomyces mobaraensis (Streptoverticillium mobaraense).